The chain runs to 663 residues: UvrABC system protein B (663 aa).

Basic and acidic residues predominate over residues 1–10; it reads MIDKRDDKPF. The interval 1–23 is disordered; the sequence is MIDKRDDKPFKLKSKYKPSGDQP. The Helicase ATP-binding domain maps to 31 to 418; that stretch reads DNIEGGEKAQ…TNTIIEQIIR (388 aa). Residue 44 to 51 coordinates ATP; it reads GATGTGKT. The Beta-hairpin motif lies at 97-120; sequence YYDYYQPEAYVPSSDTYIEKDSSV. In terms of domain architecture, Helicase C-terminal spans 435-601; the sequence is QMDDLLGEIN…TIKKDIRGLI (167 aa). Positions 627-662 constitute a UVR domain; the sequence is KEAINALQKQMQEAAELLDFELAAQMRDLILELKLM.

The protein belongs to the UvrB family. As to quaternary structure, forms a heterotetramer with UvrA during the search for lesions. Interacts with UvrC in an incision complex.

It localises to the cytoplasm. Functionally, the UvrABC repair system catalyzes the recognition and processing of DNA lesions. A damage recognition complex composed of 2 UvrA and 2 UvrB subunits scans DNA for abnormalities. Upon binding of the UvrA(2)B(2) complex to a putative damaged site, the DNA wraps around one UvrB monomer. DNA wrap is dependent on ATP binding by UvrB and probably causes local melting of the DNA helix, facilitating insertion of UvrB beta-hairpin between the DNA strands. Then UvrB probes one DNA strand for the presence of a lesion. If a lesion is found the UvrA subunits dissociate and the UvrB-DNA preincision complex is formed. This complex is subsequently bound by UvrC and the second UvrB is released. If no lesion is found, the DNA wraps around the other UvrB subunit that will check the other stand for damage. The sequence is that of UvrABC system protein B from Streptococcus pyogenes serotype M1.